A 150-amino-acid chain; its full sequence is Transcriptional repressor NrdR (150 aa).

A zinc finger lies at 3-33 (CPFCGGESRVLESRPASDEEAVRRRRECLAC). The ATP-cone domain occupies 48–138 (LIVVKKDGRR…VYREFKDLNE (91 aa)).

This sequence belongs to the NrdR family. Zn(2+) is required as a cofactor.

Negatively regulates transcription of bacterial ribonucleotide reductase nrd genes and operons by binding to NrdR-boxes. This Symbiobacterium thermophilum (strain DSM 24528 / JCM 14929 / IAM 14863 / T) protein is Transcriptional repressor NrdR.